A 288-amino-acid chain; its full sequence is N-acetyltransferase ECO1 (288 aa).

The interval 1 to 50 (MKRDITQLLSPELSQSSSRNDKKRKPTNSNKKVQTVLNFPSSSPNASQST) is disordered. The span at 7-18 (QLLSPELSQSSS) shows a compositional bias: low complexity. Residues 27 to 50 (TNSNKKVQTVLNFPSSSPNASQST) show a composition bias toward polar residues. The segment at 50-74 (TTCPTCGMTYYSHVSKDNDVHNKYH) adopts a CCHH-type zinc-finger fold.

The protein belongs to the acetyltransferase family. ECO subfamily.

It is found in the nucleus. Functionally, probable acetyltransferase required for the establishment of sister chromatid cohesion and couple the processes of cohesion and DNA replication to ensure that only sister chromatids become paired together. In contrast to the structural cohesins, the deposition and establishment factors are required only during S phase. Acts by acetylating the cohesin complex component SMC3. The polypeptide is N-acetyltransferase ECO1 (ECO1) (Debaryomyces hansenii (strain ATCC 36239 / CBS 767 / BCRC 21394 / JCM 1990 / NBRC 0083 / IGC 2968) (Yeast)).